We begin with the raw amino-acid sequence, 40 residues long: Large ribosomal subunit protein bL36A (40 aa).

This sequence belongs to the bacterial ribosomal protein bL36 family.

This Kineococcus radiotolerans (strain ATCC BAA-149 / DSM 14245 / SRS30216) protein is Large ribosomal subunit protein bL36A.